A 623-amino-acid chain; its full sequence is Endoglucanase 12 (623 aa).

The Cytoplasmic portion of the chain corresponds to 1–73 (MYSANHWGGS…LGCVVVKRKL (73 aa)). Residues 74 to 94 (LWWVLWTLLAAFILIGLPVII) traverse the membrane as a helical; Signal-anchor for type II membrane protein segment. The Extracellular portion of the chain corresponds to 95 to 623 (AKSIPKKKPH…TPPPPSKWKP (529 aa)). Aspartate 166 serves as the catalytic Nucleophile. 6 N-linked (GlcNAc...) asparagine glycosylation sites follow: asparagine 217, asparagine 236, asparagine 324, asparagine 345, asparagine 408, and asparagine 425. Residues histidine 513, aspartate 561, and glutamate 570 contribute to the active site.

Belongs to the glycosyl hydrolase 9 (cellulase E) family. Ubiquitous.

Its subcellular location is the membrane. The catalysed reaction is Endohydrolysis of (1-&gt;4)-beta-D-glucosidic linkages in cellulose, lichenin and cereal beta-D-glucans.. The chain is Endoglucanase 12 (GLU3) from Oryza sativa subsp. japonica (Rice).